The chain runs to 914 residues: Probable dipeptidyl-aminopeptidase B (914 aa).

The span at 1–10 (MATFSDHETS) shows a compositional bias: basic and acidic residues. Residues 1–63 (MATFSDHETS…TGMDNGDRYR (63 aa)) form a disordered region. At 1–91 (MATFSDHETS…KAATGGRARR (91 aa)) the chain is on the cytoplasmic side. Low complexity predominate over residues 20–35 (STSSASQTSSDSGLSS). Polar residues predominate over residues 45-56 (QPFSAPNGTTGM). A helical; Signal-anchor for type II membrane protein membrane pass occupies residues 92–112 (IFWLLVLLCFGGWLLAFVLFL). The Vacuolar portion of the chain corresponds to 113–914 (TGGRANYQSA…RFKRSLPVLV (802 aa)). Asparagine 348, asparagine 565, and asparagine 639 each carry an N-linked (GlcNAc...) asparagine glycan. Serine 753 acts as the Charge relay system in catalysis. Asparagine 807 carries an N-linked (GlcNAc...) asparagine glycan. Catalysis depends on charge relay system residues aspartate 830 and histidine 863.

This sequence belongs to the peptidase S9B family.

Its subcellular location is the vacuole membrane. It carries out the reaction Release of an N-terminal dipeptide, Xaa-Yaa-|-Zaa-, from a polypeptide, preferentially when Yaa is Pro, provided Zaa is neither Pro nor hydroxyproline.. Functionally, type IV dipeptidyl-peptidase which removes N-terminal dipeptides sequentially from polypeptides having unsubstituted N-termini provided that the penultimate residue is proline. This Aspergillus clavatus (strain ATCC 1007 / CBS 513.65 / DSM 816 / NCTC 3887 / NRRL 1 / QM 1276 / 107) protein is Probable dipeptidyl-aminopeptidase B (dapB).